Reading from the N-terminus, the 456-residue chain is Endoglucanase A (456 aa).

The signal sequence occupies residues 1 to 30; the sequence is MSRIRRFLATALAAATAGVGAIVTAIASAG. The segment at 31–322 is catalytic; it reads PAHAYDSPFY…RAYELAMNAA (292 aa). Asp-113 is a catalytic residue. Cystine bridges form between Cys-114–Cys-159 and Cys-267–Cys-302. Asp-151 (proton donor) is an active-site residue. Residues 255-280 form a disordered region; sequence SRNGNGPLGSEWCDPPGRATGTWSTT. The active-site Nucleophile is Asp-300. Positions 321-358 are disordered; sequence AAPPTYSPSPTPSTPSPSPSQSDPGSPSPSPSQPPAGR. Residues 323-355 are linker ('hinge') (Pro-Ser box); that stretch reads PPTYSPSPTPSTPSPSPSQSDPGSPSPSPSQPP. The span at 325–338 shows a compositional bias: pro residues; the sequence is TYSPSPTPSTPSPS. A CBM2 domain is found at 353-456; the sequence is QPPAGRACEA…LSSSITCSAS (104 aa). The cysteines at positions 360 and 453 are disulfide-linked.

Belongs to the glycosyl hydrolase 6 (cellulase B) family.

The enzyme catalyses Endohydrolysis of (1-&gt;4)-beta-D-glucosidic linkages in cellulose, lichenin and cereal beta-D-glucans.. The protein is Endoglucanase A (celA) of Thermobispora bispora (Microbispora bispora).